The primary structure comprises 485 residues: Glutamyl-tRNA(Gln) amidotransferase subunit A (485 aa).

Catalysis depends on charge relay system residues K76 and S151. S175 functions as the Acyl-ester intermediate in the catalytic mechanism.

Belongs to the amidase family. GatA subfamily. As to quaternary structure, heterotrimer of A, B and C subunits.

The enzyme catalyses L-glutamyl-tRNA(Gln) + L-glutamine + ATP + H2O = L-glutaminyl-tRNA(Gln) + L-glutamate + ADP + phosphate + H(+). Functionally, allows the formation of correctly charged Gln-tRNA(Gln) through the transamidation of misacylated Glu-tRNA(Gln) in organisms which lack glutaminyl-tRNA synthetase. The reaction takes place in the presence of glutamine and ATP through an activated gamma-phospho-Glu-tRNA(Gln). This Thiobacillus denitrificans (strain ATCC 25259 / T1) protein is Glutamyl-tRNA(Gln) amidotransferase subunit A.